The chain runs to 195 residues: SAGA-associated factor 11 homolog (195 aa).

Residues 1–22 (MSAANMPTTTGAQGSGNQVPRT) are disordered. The SGF11-type zinc finger occupies 105 to 126 (CTCPNCDRLVAAARFAPHLEKC). The segment at 140–195 (RLATKEGATSAHLHSSGNTGGTDDEDDVDWSSDKRRKKSNQNSRNNGSKKNNGKTF) is disordered. S171 carries the phosphoserine modification. Positions 179-195 (NQNSRNNGSKKNNGKTF) are enriched in low complexity.

It belongs to the SGF11 family. In terms of assembly, component of some SAGA transcription coactivator-HAT complexes, at least composed of Ada2b, not/nonstop, Pcaf/Gcn5, Sgf11 and Spt3. Within the SAGA complex, Sgf11, e(y)2, and not/nonstop form an additional subcomplex of SAGA called the DUB module (deubiquitination module). Interacts directly with not/nonstop. Interacts with the AMEX complex component xmas-2. Interacts with Cbp80; important for promoter recruitment of Sgf11 that is not associated with the DUB module.

Its subcellular location is the nucleus. The protein resides in the nucleoplasm. It localises to the cytoplasm. In terms of biological role, component of the transcription regulatory histone acetylation (HAT) complex SAGA, a multiprotein complex that activates transcription by remodeling chromatin and mediating histone acetylation and deubiquitination. Within the SAGA complex, participates in a subcomplex that specifically deubiquitinates histone H2B. The SAGA complex is recruited to specific gene promoters by activators, where it is required for transcription. Required for nuclear receptor-mediated transactivation. Binds independently on SAGA to promoters in an RNA-dependent manner. Binds to mRNA and is essential for total mRNA export from the nucleus. Required to counteract heterochromatin silencing. Controls the development of neuronal connectivity in visual system by being required for accurate axon targeting in the optic lobe. Required for expression of ecdysone-induced genes such as br/broad. The polypeptide is SAGA-associated factor 11 homolog (Drosophila sechellia (Fruit fly)).